The sequence spans 386 residues: Succinate--CoA ligase [ADP-forming] subunit beta (386 aa).

ATP is bound by residues lysine 46, glutamate 99, alanine 102, and glutamate 107. Positions 199 and 213 each coordinate Mg(2+). Residues asparagine 264 and 321 to 323 contribute to the substrate site; that span reads GIM.

This sequence belongs to the succinate/malate CoA ligase beta subunit family. Heterotetramer of two alpha and two beta subunits. The cofactor is Mg(2+).

The catalysed reaction is succinate + ATP + CoA = succinyl-CoA + ADP + phosphate. It carries out the reaction GTP + succinate + CoA = succinyl-CoA + GDP + phosphate. The protein operates within carbohydrate metabolism; tricarboxylic acid cycle; succinate from succinyl-CoA (ligase route): step 1/1. In terms of biological role, succinyl-CoA synthetase functions in the citric acid cycle (TCA), coupling the hydrolysis of succinyl-CoA to the synthesis of either ATP or GTP and thus represents the only step of substrate-level phosphorylation in the TCA. The beta subunit provides nucleotide specificity of the enzyme and binds the substrate succinate, while the binding sites for coenzyme A and phosphate are found in the alpha subunit. The sequence is that of Succinate--CoA ligase [ADP-forming] subunit beta from Orientia tsutsugamushi (strain Ikeda) (Rickettsia tsutsugamushi).